The primary structure comprises 343 residues: Heat-inducible transcription repressor HrcA (343 aa).

It belongs to the HrcA family.

Its function is as follows. Negative regulator of class I heat shock genes (grpE-dnaK-dnaJ and groELS operons). Prevents heat-shock induction of these operons. The chain is Heat-inducible transcription repressor HrcA from Phytoplasma mali (strain AT).